The following is a 665-amino-acid chain: Methionine--tRNA ligase (665 aa).

Residues 12-22 carry the 'HIGH' region motif; that stretch reads YYPSGKLHIGS. The 'KMSKS' region signature appears at 308–312; the sequence is KMSKS. Lys-311 provides a ligand contact to ATP. The tRNA-binding domain maps to 562 to 665; the sequence is TFDAVEIRVA…SSVPNGSIIG (104 aa).

The protein belongs to the class-I aminoacyl-tRNA synthetase family. MetG type 2B subfamily. Homodimer.

The protein resides in the cytoplasm. The enzyme catalyses tRNA(Met) + L-methionine + ATP = L-methionyl-tRNA(Met) + AMP + diphosphate. Functionally, is required not only for elongation of protein synthesis but also for the initiation of all mRNA translation through initiator tRNA(fMet) aminoacylation. In Streptococcus pyogenes serotype M18 (strain MGAS8232), this protein is Methionine--tRNA ligase (metG).